The following is a 246-amino-acid chain: Chaperone protein SefB (246 aa).

The signal sequence occupies residues 1-24 (MYILNKFIRRTVIFFFFCYLPIAS). A disulfide bond links cysteine 124 and cysteine 155.

The protein belongs to the periplasmic pilus chaperone family.

Its subcellular location is the periplasm. Required for the biogenesis of the SefA (SEF14) fimbria. The polypeptide is Chaperone protein SefB (sefB) (Salmonella enteritidis).